The chain runs to 416 residues: Serine hydroxymethyltransferase (416 aa).

(6S)-5,6,7,8-tetrahydrofolate-binding positions include Leu-121 and 125–127; that span reads GHL. Residue Lys-230 is modified to N6-(pyridoxal phosphate)lysine.

It belongs to the SHMT family. As to quaternary structure, homodimer. The cofactor is pyridoxal 5'-phosphate.

The protein resides in the cytoplasm. It catalyses the reaction (6R)-5,10-methylene-5,6,7,8-tetrahydrofolate + glycine + H2O = (6S)-5,6,7,8-tetrahydrofolate + L-serine. The protein operates within one-carbon metabolism; tetrahydrofolate interconversion. It participates in amino-acid biosynthesis; glycine biosynthesis; glycine from L-serine: step 1/1. Its function is as follows. Catalyzes the reversible interconversion of serine and glycine with tetrahydrofolate (THF) serving as the one-carbon carrier. This reaction serves as the major source of one-carbon groups required for the biosynthesis of purines, thymidylate, methionine, and other important biomolecules. Also exhibits THF-independent aldolase activity toward beta-hydroxyamino acids, producing glycine and aldehydes, via a retro-aldol mechanism. This Nitrosomonas europaea (strain ATCC 19718 / CIP 103999 / KCTC 2705 / NBRC 14298) protein is Serine hydroxymethyltransferase.